We begin with the raw amino-acid sequence, 141 residues long: Fluoride-specific ion channel FluC 1 (141 aa).

4 helical membrane-spanning segments follow: residues 12–32, 44–64, 79–99, and 107–127; these read LYALIAAGSVIGGCARYLVGV, WATLFVNVTGSFVIGFYAAIA, FVMTGICGGYTTFSGFSLETF, and ALAALINLGVSPMSWLVAVWL. Residues Gly-86 and Thr-89 each contribute to the Na(+) site.

The protein belongs to the fluoride channel Fluc/FEX (TC 1.A.43) family.

The protein localises to the cell inner membrane. It carries out the reaction fluoride(in) = fluoride(out). Its activity is regulated as follows. Na(+) is not transported, but it plays an essential structural role and its presence is essential for fluoride channel function. Fluoride-specific ion channel. Important for reducing fluoride concentration in the cell, thus reducing its toxicity. The chain is Fluoride-specific ion channel FluC 1 from Rhodopseudomonas palustris (strain BisB18).